The primary structure comprises 459 residues: Transcriptional coactivator YAP1-A (459 aa).

The segment covering 1 to 13 (MEPGSQQQPSAPA) has biased composition (low complexity). Residues 1–22 (MEPGSQQQPSAPAQQPPPVGHQ) are disordered. A phosphoserine; by LATS1 and LATS2 mark is found at S30, S80, S98, and S134. Disordered stretches follow at residues 65–99 (FKQP…AHSS) and 126–145 (SAPH…PLPP). WW domains are found at residues 141-174 (VPLP…DPRK) and 199-232 (GPLP…DPRL). Residues 246 to 268 (NAPVKAPPALPPPSPQTGVLGSG) form a disordered region. The segment covering 250–260 (KAPPALPPPSP) has biased composition (pro residues). The transactivation domain stretch occupies residues 261–459 (QTGVLGSGGN…LDKESFLTWL (199 aa)). Residues 269 to 297 (GNQQMRLQQLQMEKERLRLKHQELLRQVR) are a coiled coil. Residues 344–363 (GTYHSRDESTESGLSMSSYS) are disordered. A compositionally biased stretch (polar residues) spans 354 to 363 (ESGLSMSSYS).

It belongs to the YAP1 family. Interacts with tead1. In terms of processing, phosphorylated by lats1 and lats2; leading to cytoplasmic translocation and inactivation.

The protein localises to the cytoplasm. It localises to the nucleus. Its subcellular location is the cell junction. It is found in the tight junction. The protein resides in the cell membrane. Its function is as follows. Transcriptional regulator which can act both as a coactivator and a corepressor and is the critical downstream regulatory target in the Hippo signaling pathway that plays a pivotal role in organ size control and tumor suppression by restricting proliferation and promoting apoptosis. Plays a key role in tissue tension and 3D tissue shape by regulating cortical actomyosin network formation. Required for expansion of the neural plate and neural plate border zone progenitor pools. Acts as a direct regulator of pax3 expression via interaction with tead1. The polypeptide is Transcriptional coactivator YAP1-A (Xenopus laevis (African clawed frog)).